Here is a 216-residue protein sequence, read N- to C-terminus: uncharacterized protein (216 aa).

A helical transmembrane segment spans residues 1–21 (MTIVHFVGSLFFFFFFSYIFF).

It is found in the membrane. This is an uncharacterized protein from Saccharomyces cerevisiae (strain ATCC 204508 / S288c) (Baker's yeast).